The primary structure comprises 530 residues: 4,4'-diapolycopene aldehyde oxidase (530 aa).

Residues Glu-234 and Cys-268 contribute to the active site.

This sequence belongs to the aldehyde dehydrogenase family.

It catalyses the reaction all-trans-4,4'-diapolycopen-4-al + A + H2O = all-trans-4,4'-diapolycopen-4-oate + AH2 + H(+). The catalysed reaction is all-trans-4,4'-diapolycopene-4,4'-dial + 2 A + 2 H2O = all-trans-4,4'-diapolycopene-4,4'-dioate + 2 AH2 + 2 H(+). It functions in the pathway carotenoid biosynthesis. Functionally, involved in the biosynthesis of C30 carotenoids. Catalyzes the oxidation of 4,4'-diapolycopene-4,4'-dial to yield 4,4'-diapolycopene-4,4'-dioic acid. Also able to catalyze the oxidation of 4,4'-diapolycopen-4-al to yield 4,4'-diapolycopen-4-oic acid. This is 4,4'-diapolycopene aldehyde oxidase from Methylomonas sp.